Here is a 214-residue protein sequence, read N- to C-terminus: Adenylate kinase (214 aa).

Residue 10–15 (GAGKGT) coordinates ATP. The tract at residues 30–59 (STGDMLRAAIKAGTELGKQAKSVIDAGQLV) is NMP. AMP-binding positions include Thr-31, Arg-36, 57–59 (QLV), 85–88 (GFPR), and Gln-92. The LID stretch occupies residues 122–159 (GRRAHLPSGRTYHNVYNPPKEEGKDDITGEELVVRDDD). ATP-binding positions include Arg-123 and 132-133 (TY). The AMP site is built by Arg-156 and Arg-167. Lys-200 provides a ligand contact to ATP.

The protein belongs to the adenylate kinase family. As to quaternary structure, monomer.

It is found in the cytoplasm. The catalysed reaction is AMP + ATP = 2 ADP. The protein operates within purine metabolism; AMP biosynthesis via salvage pathway; AMP from ADP: step 1/1. Its function is as follows. Catalyzes the reversible transfer of the terminal phosphate group between ATP and AMP. Plays an important role in cellular energy homeostasis and in adenine nucleotide metabolism. The protein is Adenylate kinase of Vibrio atlanticus (strain LGP32) (Vibrio splendidus (strain Mel32)).